Consider the following 215-residue polypeptide: NAD(P)H-hydrate epimerase (215 aa).

Positions 10–211 (AQRYDAHATN…DIGIYAQDRV (202 aa)) constitute a YjeF N-terminal domain. 58-62 (NNGGD) lines the (6S)-NADPHX pocket. Residues Asn-59 and Asp-121 each coordinate K(+). Residues 125–131 (GVGLTRD) and Asp-154 contribute to the (6S)-NADPHX site. Ser-157 is a binding site for K(+).

The protein belongs to the NnrE/AIBP family. It depends on K(+) as a cofactor.

The catalysed reaction is (6R)-NADHX = (6S)-NADHX. It catalyses the reaction (6R)-NADPHX = (6S)-NADPHX. Catalyzes the epimerization of the S- and R-forms of NAD(P)HX, a damaged form of NAD(P)H that is a result of enzymatic or heat-dependent hydration. This is a prerequisite for the S-specific NAD(P)H-hydrate dehydratase to allow the repair of both epimers of NAD(P)HX. This Levilactobacillus brevis (strain ATCC 367 / BCRC 12310 / CIP 105137 / JCM 1170 / LMG 11437 / NCIMB 947 / NCTC 947) (Lactobacillus brevis) protein is NAD(P)H-hydrate epimerase.